Reading from the N-terminus, the 181-residue chain is Transmembrane protein 190 (181 aa).

A signal peptide spans 1–21 (MVASGIPALSLFLLMQGSVDG). The Extracellular segment spans residues 22-81 (NGIQGFFYPWSCEGDVWDRESCGGQAAIENPNLCLRLRCCYRDGVCYHQRPDETMRRKHM). The P-type domain maps to 31 to 71 (WSCEGDVWDRESCGGQAAIENPNLCLRLRCCYRDGVCYHQR). Cystine bridges form between Cys33-Cys61, Cys43-Cys60, and Cys55-Cys67. A helical membrane pass occupies residues 82–102 (WALGWTCGGLLFLISSICLFW). Topologically, residues 103-181 (WAKRRDMLHL…EETEGGEDED (79 aa)) are cytoplasmic. The tract at residues 135 to 181 (TLSDKKTSAGSVPTSLPTEGNADVSGATEGEGTTEGGEETEGGEDED) is disordered. Polar residues predominate over residues 142–152 (SAGSVPTSLPT). The span at 170–181 (GGEETEGGEDED) shows a compositional bias: acidic residues.

Its subcellular location is the membrane. In Canis lupus familiaris (Dog), this protein is Transmembrane protein 190 (TMEM190).